We begin with the raw amino-acid sequence, 407 residues long: uncharacterized protein (407 aa).

Belongs to the peptidase U32 family.

This is an uncharacterized protein from Methanocaldococcus jannaschii (strain ATCC 43067 / DSM 2661 / JAL-1 / JCM 10045 / NBRC 100440) (Methanococcus jannaschii).